The following is a 91-amino-acid chain: DNA-directed RNA polymerase subunit omega (91 aa).

The protein belongs to the RNA polymerase subunit omega family. As to quaternary structure, the RNAP catalytic core consists of 2 alpha, 1 beta, 1 beta' and 1 omega subunit. When a sigma factor is associated with the core the holoenzyme is formed, which can initiate transcription.

The catalysed reaction is RNA(n) + a ribonucleoside 5'-triphosphate = RNA(n+1) + diphosphate. In terms of biological role, promotes RNA polymerase assembly. Latches the N- and C-terminal regions of the beta' subunit thereby facilitating its interaction with the beta and alpha subunits. The polypeptide is DNA-directed RNA polymerase subunit omega (Proteus mirabilis (strain HI4320)).